The following is a 93-amino-acid chain: YcgL domain-containing protein KPK_1976 (93 aa).

The YcgL domain occupies 1-85 (MFCVIYRSTK…PSENLLKKHL (85 aa)).

This is YcgL domain-containing protein KPK_1976 from Klebsiella pneumoniae (strain 342).